The following is a 362-amino-acid chain: Glutaminase-asparaginase (362 aa).

The first 25 residues, 1–25 (MKSALKTFVPGALALLLLFPVAAQA), serve as a signal peptide directing secretion. The 328-residue stretch at 35–362 (ANVVILATGG…KELQRMFWEY (328 aa)) folds into the Asparaginase/glutaminase domain. Thr-45 serves as the catalytic Acyl-ester intermediate. Substrate contacts are provided by residues Ser-92 and 125–126 (TD).

This sequence belongs to the asparaginase 1 family. As to quaternary structure, homotetramer.

Its subcellular location is the periplasm. It catalyses the reaction L-glutamine + H2O = L-glutamate + NH4(+). The enzyme catalyses L-asparagine + H2O = L-aspartate + NH4(+). The protein is Glutaminase-asparaginase of Pseudomonas fluorescens biotype A.